We begin with the raw amino-acid sequence, 984 residues long: MASNPERGEILLTELQGDSRSLPFSENVSAVQKLDFSDTMVQQKLDDIKDRIKREIRKELKIKEGAENLRKVTTDKKSLAYVDNILKKSNKKLEELHHKLQELNAHIVVSDPEDITDCPRTPDTPNNDPRCSTSNNRLKALQKQLDIELKVKQGAENMIQMYSNGSSKDRKLHGTAQQLLQDSKTKIEVIRMQILQAVQTNELAFDNAKPVISPLELRMEELRHHFRIEFAVAEGAKNVMKLLGSGKVTDRKALSEAQARFNESSQKLDLLKYSLEQRLNEVPKNHPKSRIIIEELSLVAASPTLSPRQSMISTQNQYSTLSKPAALTGTLEVRLMGCQDILENVPGRSKATSVALPGWSPSETRSSFMSRTSKSKSGSSRNLLKTDDLSNDVCAVLKLDNTVVGQTSWKPISNQSWDQKFTLELDRSRELEISVYWRDWRSLCAVKFLRLEDFLDNQRHGMCLYLEPQGTLFAEVTFFNPVIERRPKLQRQKKIFSKQQGKTFLRAPQMNINIATWGRLVRRAIPTVNHSGTFSPQAPVPTTVPVVDVRIPQLAPPASDSTVTKLDFDLEPEPPPAPPRASSLGEIDESSELRVLDIPGQDSETVFDIQNDRNSILPKSQSEYKPDTPQSGLEYSGIQELEDRRSQQRFQFNLQDFRCCAVLGRGHFGKVLLAEYKNTNEMFAIKALKKGDIVARDEVDSLMCEKRIFETVNSVRHPFLVNLFACFQTKEHVCFVMEYAAGGDLMMHIHTDVFSEPRAVFYAACVVLGLQYLHEHKIVYRDLKLDNLLLDTEGFVKIADFGLCKEGMGYGDRTSTFCGTPEFLAPEVLTETSYTRAVDWWGLGVLIYEMLVGESPFPGDDEEEVFDSIVNDEVRYPRFLSTEAISIMRRLLRRNPERRLGASEKDAEDVKKHPFFRLIDWSALMDKKVKPPFIPTIRGREDVSNFDDEFTSEAPILTPPREPRILSEEEQEMFRDFDYIADWC.

A Phosphoserine modification is found at serine 21. Positions 33–109 (KLDFSDTMVQ…LQELNAHIVV (77 aa)) constitute an REM-1 1 domain. Lysine 77 is modified (N6-acetyllysine). Serine 110 carries the post-translational modification Phosphoserine. The disordered stretch occupies residues 114–133 (DITDCPRTPDTPNNDPRCST). Residues threonine 121 and threonine 124 each carry the phosphothreonine modification. REM-1 domains are found at residues 121–203 (TPDT…TNEL) and 204–284 (AFDN…EVPK). Positions 123-133 (DTPNNDPRCST) are enriched in polar residues. Phosphoserine occurs at positions 302, 306, 360, and 362. The tract at residues 351 to 383 (ATSVALPGWSPSETRSSFMSRTSKSKSGSSRNL) is disordered. Residues 353 to 473 (SVALPGWSPS…LYLEPQGTLF (121 aa)) enclose the C2 domain. Positions 364-381 (TRSSFMSRTSKSKSGSSR) are enriched in low complexity. The necessary to rescue apical junction formation stretch occupies residues 382-463 (NLLKTDDLSN…FLDNQRHGMC (82 aa)). Serine 535, serine 583, and serine 620 each carry phosphoserine. Residues 558–584 (ASDSTVTKLDFDLEPEPPPAPPRASSL) form a disordered region. Threonine 628 bears the Phosphothreonine mark. Residue serine 631 is modified to Phosphoserine. The Protein kinase domain occupies 657-916 (FRCCAVLGRG…AEDVKKHPFF (260 aa)). ATP is bound by residues 663–671 (LGRGHFGKV) and lysine 686. Aspartate 782 serves as the catalytic Proton acceptor. Position 816 is a phosphothreonine; by PDPK1 (threonine 816). The tract at residues 917–977 (RLIDWSALMD…EEEQEMFRDF (61 aa)) is necessary for the catalytic activity. In terms of domain architecture, AGC-kinase C-terminal spans 917 to 984 (RLIDWSALMD…RDFDYIADWC (68 aa)). At serine 952 the chain carries Phosphoserine. Threonine 958 is modified (phosphothreonine). Residues 978-984 (DYIADWC) form a negatively regulates the responsiveness of the catalytic activity by cardiolipin and is required for optimal activation by the GTP-bound RhoA region.

Belongs to the protein kinase superfamily. AGC Ser/Thr protein kinase family. PKC subfamily. In terms of assembly, interacts (via the REM repeats) with RHOA (GTP-bound form preferentially) and interacts (via the REM repeats) with RAC1 (GTP-bound form preferentially); the interactions induce its autophosphorylation. Interacts with RHOC. Interacts with NCK1 and NCK2. Interacts with NCK1 (via SH3 domains). Interacts with CD44. Interacts (via C-terminal kinase domain) with PDPK1; the interaction stimulates PDPK1 kinase activity. Interacts with MAP3K2; the interaction activates PRK2 kinase activity in a MAP3K2-independent kinase activity. Interacts (via C-terminal domain) with AKT1; the interaction occurs with the C-terminal cleavage product of PRK2 in apoptotic cells. Interacts (via C-terminus) with PTPN13 (via PDZ 3 domain). Interacts with CDK10. As to quaternary structure, (Microbial infection) Interacts with HCV NS5B (via N-terminal finger domain). Post-translationally, autophosphorylated. Phosphorylated during mitosis. Phosphorylated by CDK10. Activated by limited proteolysis with trypsin. Proteolytically cleaved by caspase-3 during the induction of apoptotic cell death. In terms of tissue distribution, ubiquitous. Expressed in numerous tumor cell lines, especially in bladder tumor cells.

It localises to the cytoplasm. It is found in the nucleus. The protein localises to the membrane. The protein resides in the cell projection. Its subcellular location is the lamellipodium. It localises to the cytoskeleton. It is found in the cleavage furrow. The protein localises to the midbody. The protein resides in the cell junction. The catalysed reaction is L-seryl-[protein] + ATP = O-phospho-L-seryl-[protein] + ADP + H(+). It catalyses the reaction L-threonyl-[protein] + ATP = O-phospho-L-threonyl-[protein] + ADP + H(+). Kinase activity is activated upon binding to GTP-bound Rhoa/Rac1 GTPases. Activated by caspase-3 (CASP3) cleavage during apoptosis. Activated by lipids, particularly cardiolipin and to a lesser extent by other acidic phospholipids and unsaturated fatty acids. Two specific sites, Thr-816 (activation loop of the kinase domain) and Thr-958 (turn motif), need to be phosphorylated for its full activation. In terms of biological role, PKC-related serine/threonine-protein kinase and Rho/Rac effector protein that participates in specific signal transduction responses in the cell. Plays a role in the regulation of cell cycle progression, actin cytoskeleton assembly, cell migration, cell adhesion, tumor cell invasion and transcription activation signaling processes. Phosphorylates CTTN in hyaluronan-induced astrocytes and hence decreases CTTN ability to associate with filamentous actin. Phosphorylates HDAC5, therefore lead to impair HDAC5 import. Direct RhoA target required for the regulation of the maturation of primordial junctions into apical junction formation in bronchial epithelial cells. Required for G2/M phases of the cell cycle progression and abscission during cytokinesis in a ECT2-dependent manner. Stimulates FYN kinase activity that is required for establishment of skin cell-cell adhesion during keratinocytes differentiation. Regulates epithelial bladder cells speed and direction of movement during cell migration and tumor cell invasion. Inhibits Akt pro-survival-induced kinase activity. Mediates Rho protein-induced transcriptional activation via the c-fos serum response factor (SRF). Involved in the negative regulation of ciliogenesis. Its function is as follows. (Microbial infection) Phosphorylates HCV NS5B leading to stimulation of HCV RNA replication. The chain is Serine/threonine-protein kinase N2 (PKN2) from Homo sapiens (Human).